The chain runs to 490 residues: Glutamyl-tRNA(Gln) amidotransferase subunit A (490 aa).

Residues K79 and S154 each act as charge relay system in the active site. S178 acts as the Acyl-ester intermediate in catalysis.

Belongs to the amidase family. GatA subfamily. Heterotrimer of A, B and C subunits.

It catalyses the reaction L-glutamyl-tRNA(Gln) + L-glutamine + ATP + H2O = L-glutaminyl-tRNA(Gln) + L-glutamate + ADP + phosphate + H(+). In terms of biological role, allows the formation of correctly charged Gln-tRNA(Gln) through the transamidation of misacylated Glu-tRNA(Gln) in organisms which lack glutaminyl-tRNA synthetase. The reaction takes place in the presence of glutamine and ATP through an activated gamma-phospho-Glu-tRNA(Gln). This chain is Glutamyl-tRNA(Gln) amidotransferase subunit A, found in Roseiflexus castenholzii (strain DSM 13941 / HLO8).